The primary structure comprises 126 residues: Glycine cleavage system H protein (126 aa).

The 83-residue stretch at 22-104 (VATVGITEYA…YEKAWMVKIE (83 aa)) folds into the Lipoyl-binding domain. Lys63 is modified (N6-lipoyllysine).

It belongs to the GcvH family. As to quaternary structure, the glycine cleavage system is composed of four proteins: P, T, L and H. (R)-lipoate serves as cofactor.

Its function is as follows. The glycine cleavage system catalyzes the degradation of glycine. The H protein shuttles the methylamine group of glycine from the P protein to the T protein. Is also involved in protein lipoylation via its role as an octanoyl/lipoyl carrier protein intermediate. This chain is Glycine cleavage system H protein, found in Staphylococcus epidermidis (strain ATCC 12228 / FDA PCI 1200).